Reading from the N-terminus, the 130-residue chain is Small ribosomal subunit protein uS11 (130 aa).

This sequence belongs to the universal ribosomal protein uS11 family. In terms of assembly, part of the 30S ribosomal subunit. Interacts with proteins S7 and S18. Binds to IF-3.

Its function is as follows. Located on the platform of the 30S subunit, it bridges several disparate RNA helices of the 16S rRNA. Forms part of the Shine-Dalgarno cleft in the 70S ribosome. This is Small ribosomal subunit protein uS11 from Nitrobacter hamburgensis (strain DSM 10229 / NCIMB 13809 / X14).